The sequence spans 442 residues: Betaine reductase complex component B subunit alpha (442 aa).

As to quaternary structure, heterotetramer of two alpha and two beta subunits. Component of the betaine reductase complex, together with components A and C. PB is substrate specific.

The enzyme catalyses acetyl phosphate + trimethylamine + [thioredoxin]-disulfide + H2O = glycine betaine + [thioredoxin]-dithiol + phosphate + H(+). In terms of biological role, in the first step of betaine reductase, the substrate is bound to component PB via a Schiff base intermediate. Then the PB-activated substrate is nucleophilically attacked by the selenol anion of component PA to transform it to a carboxymethylated selenoether and the respective amine. By action of component PC, acetyl phosphate is formed, leaving component PA in its oxidized state. Finally component PA becomes reduced by the thioredoxin system to start a new catalytic cycle of reductive deamination. The protein is Betaine reductase complex component B subunit alpha (grdI) of Peptoclostridium acidaminophilum (Eubacterium acidaminophilum).